Consider the following 257-residue polypeptide: Ubiquinone biosynthesis O-methyltransferase (257 aa).

The S-adenosyl-L-methionine site is built by Arg-43, Gly-77, Asp-98, and Met-144.

Belongs to the methyltransferase superfamily. UbiG/COQ3 family.

It catalyses the reaction a 3-demethylubiquinol + S-adenosyl-L-methionine = a ubiquinol + S-adenosyl-L-homocysteine + H(+). It carries out the reaction a 3-(all-trans-polyprenyl)benzene-1,2-diol + S-adenosyl-L-methionine = a 2-methoxy-6-(all-trans-polyprenyl)phenol + S-adenosyl-L-homocysteine + H(+). Its pathway is cofactor biosynthesis; ubiquinone biosynthesis. O-methyltransferase that catalyzes the 2 O-methylation steps in the ubiquinone biosynthetic pathway. The polypeptide is Ubiquinone biosynthesis O-methyltransferase (Psychrobacter cryohalolentis (strain ATCC BAA-1226 / DSM 17306 / VKM B-2378 / K5)).